A 464-amino-acid chain; its full sequence is UDP-glucose:undecaprenyl-phosphate glucose-1-phosphate transferase (464 aa).

Residues 1 to 15 are Cytoplasmic-facing; sequence MTNLKKRERAKTNAS. Residues 16-36 traverse the membrane as a helical segment; it reads LISMVQRFSDITIMFAGLWLV. The Periplasmic portion of the chain corresponds to 37-38; the sequence is CE. Residues 39–59 traverse the membrane as a helical segment; it reads VSGLSFLYMHLLVALITLVVF. The Cytoplasmic portion of the chain corresponds to 60 to 80; sequence QMLGGITDFYRSWRGVRAATE. Residues 81-101 traverse the membrane as a helical segment; sequence FALLLQNWTLSVIFSAGLVAF. Residues 102 to 104 are Periplasmic-facing; that stretch reads NND. The helical transmembrane segment at 105–125 threads the bilayer; that stretch reads FDTQLKIWLAWYALTSIGLVV. Residues 126-278 are Cytoplasmic-facing; the sequence is CRSCIRIGAG…VNRLLKRAED (153 aa). Residues 279-299 form a helical membrane-spanning segment; that stretch reads IVLATLILLLISPVLCCIALA. Residues 300–464 lie on the Periplasmic side of the membrane; the sequence is VKLSSPGPVI…FKGFVNKAAY (165 aa).

This sequence belongs to the bacterial sugar transferase family.

The protein localises to the cell inner membrane. It carries out the reaction di-trans,octa-cis-undecaprenyl phosphate + UDP-alpha-D-glucose = alpha-D-glucosyl di-trans,octa-cis-undecaprenyl diphosphate + UMP. Its pathway is exopolysaccharide biosynthesis; colanic acid biosynthesis. In terms of biological role, is the initiating enzyme for colanic acid (CA) synthesis. Catalyzes the transfer of the glucose-1-phosphate moiety from UDP-Glc onto the carrier lipid undecaprenyl phosphate (C55-P), forming a phosphoanhydride bond yielding to glucosyl-pyrophosphoryl-undecaprenol (Glc-PP-C55). Also possesses a weak galactose-1-P transferase activity. The polypeptide is UDP-glucose:undecaprenyl-phosphate glucose-1-phosphate transferase (wcaJ) (Escherichia coli (strain K12)).